The primary structure comprises 197 residues: Inner membrane-spanning protein YciB (197 aa).

Helical transmembrane passes span 22–42, 48–68, 76–96, 121–141, and 144–164; these read IYSATAALIIMVLLNVFYHWF, PSMMWITLILVMLFGGATLIF, WKPSILQWVLASGFLASHLIG, AAWVLFLLFSGALNLYVAYTF, and EIWVSFKLFGLMGLTILFLIG.

Belongs to the YciB family.

Its subcellular location is the cell inner membrane. In terms of biological role, plays a role in cell envelope biogenesis, maintenance of cell envelope integrity and membrane homeostasis. The chain is Inner membrane-spanning protein YciB from Magnetococcus marinus (strain ATCC BAA-1437 / JCM 17883 / MC-1).